The chain runs to 416 residues: Multifunctional CCA protein (416 aa).

Residues Gly-8 and Arg-11 each contribute to the ATP site. Residues Gly-8 and Arg-11 each coordinate CTP. Mg(2+)-binding residues include Asp-21 and Asp-23. ATP contacts are provided by Arg-91, Arg-137, and Arg-140. Arg-91, Arg-137, and Arg-140 together coordinate CTP. An HD domain is found at 228-329; the sequence is TGVHTLMVLA…VKIFDKADFW (102 aa).

The protein belongs to the tRNA nucleotidyltransferase/poly(A) polymerase family. Bacterial CCA-adding enzyme type 1 subfamily. In terms of assembly, monomer. Can also form homodimers and oligomers. Requires Mg(2+) as cofactor. It depends on Ni(2+) as a cofactor.

It carries out the reaction a tRNA precursor + 2 CTP + ATP = a tRNA with a 3' CCA end + 3 diphosphate. The catalysed reaction is a tRNA with a 3' CCA end + 2 CTP + ATP = a tRNA with a 3' CCACCA end + 3 diphosphate. Its function is as follows. Catalyzes the addition and repair of the essential 3'-terminal CCA sequence in tRNAs without using a nucleic acid template. Adds these three nucleotides in the order of C, C, and A to the tRNA nucleotide-73, using CTP and ATP as substrates and producing inorganic pyrophosphate. tRNA 3'-terminal CCA addition is required both for tRNA processing and repair. Also involved in tRNA surveillance by mediating tandem CCA addition to generate a CCACCA at the 3' terminus of unstable tRNAs. While stable tRNAs receive only 3'-terminal CCA, unstable tRNAs are marked with CCACCA and rapidly degraded. The protein is Multifunctional CCA protein of Shewanella baltica (strain OS185).